Reading from the N-terminus, the 772-residue chain is Mitochondrial intermediate peptidase (772 aa).

The N-terminal 37 residues, 1–37, are a transit peptide targeting the mitochondrion; it reads MLRTIILKAGSNASIPSLSRQNKLLRFFATAGAVSRT. H558 is a Zn(2+) binding site. E559 is an active-site residue. Zn(2+) is bound by residues H562 and H565.

It belongs to the peptidase M3 family. Zn(2+) serves as cofactor.

Its subcellular location is the mitochondrion matrix. The enzyme catalyses Release of an N-terminal octapeptide as second stage of processing of some proteins imported into the mitochondrion.. Its activity is regulated as follows. Stimulated by Fe(2+). Functionally, cleaves proteins, imported into the mitochondrion, to their mature size. While most mitochondrial precursor proteins are processed to the mature form in one step by mitochondrial processing peptidase (MPP), the sequential cleavage by MIP of an octapeptide after initial processing by MPP is a required step for a subgroup of nuclear-encoded precursor proteins destined for the matrix or the inner membrane. Cleaves precursor proteins of respiratory components, including subunits of the electron transport chain and tricarboxylic acid cycle enzymes, and components of the mitochondrial genetic machinery, including ribosomal proteins, translation factors, and proteins required for mitochondrial DNA metabolism. The sequence is that of Mitochondrial intermediate peptidase (OCT1) from Saccharomyces cerevisiae (strain YJM789) (Baker's yeast).